A 197-amino-acid polypeptide reads, in one-letter code: Imidazoleglycerol-phosphate dehydratase (197 aa).

It belongs to the imidazoleglycerol-phosphate dehydratase family.

The protein localises to the cytoplasm. It catalyses the reaction D-erythro-1-(imidazol-4-yl)glycerol 3-phosphate = 3-(imidazol-4-yl)-2-oxopropyl phosphate + H2O. It participates in amino-acid biosynthesis; L-histidine biosynthesis; L-histidine from 5-phospho-alpha-D-ribose 1-diphosphate: step 6/9. The chain is Imidazoleglycerol-phosphate dehydratase from Chromobacterium violaceum (strain ATCC 12472 / DSM 30191 / JCM 1249 / CCUG 213 / NBRC 12614 / NCIMB 9131 / NCTC 9757 / MK).